A 414-amino-acid chain; its full sequence is Tyrosine--tRNA ligase (414 aa).

The short motif at 57-66 (PSAPDVHIGH) is the 'HIGH' region element. The 'KMSKS' region motif lies at 241–245 (KMSKS). Lys-244 is an ATP binding site. In terms of domain architecture, S4 RNA-binding spans 352–413 (VPLIDLLVTL…GKRKFAKLSL (62 aa)).

The protein belongs to the class-I aminoacyl-tRNA synthetase family. TyrS type 2 subfamily. As to quaternary structure, homodimer.

It is found in the cytoplasm. It catalyses the reaction tRNA(Tyr) + L-tyrosine + ATP = L-tyrosyl-tRNA(Tyr) + AMP + diphosphate + H(+). Catalyzes the attachment of tyrosine to tRNA(Tyr) in a two-step reaction: tyrosine is first activated by ATP to form Tyr-AMP and then transferred to the acceptor end of tRNA(Tyr). The protein is Tyrosine--tRNA ligase of Shouchella clausii (strain KSM-K16) (Alkalihalobacillus clausii).